The sequence spans 234 residues: Probable chemoreceptor glutamine deamidase CheD (234 aa).

It belongs to the CheD family.

The enzyme catalyses L-glutaminyl-[protein] + H2O = L-glutamyl-[protein] + NH4(+). In terms of biological role, probably deamidates glutamine residues to glutamate on methyl-accepting chemotaxis receptors (MCPs), playing an important role in chemotaxis. The polypeptide is Probable chemoreceptor glutamine deamidase CheD (Burkholderia pseudomallei (strain 1710b)).